Reading from the N-terminus, the 233-residue chain is Bcl-2-like protein 1 (233 aa).

A BH4 motif is present at residues 4–24 (SNRELVVDFLSYKLSQKGYSW). The disordered stretch occupies residues 29 to 71 (DVEENRTEAPEGTESEAETPSAINGNPSWHLADSPAVNGATGH). Serine 49 is subject to Phosphoserine; by PLK3. A Phosphoserine; by CDK1 modification is found at serine 62. The BH3 motif lies at 86–100 (VKQALREAGDEFELR). Positions 129–148 (ELFRDGVNWGRIVAFFSFGG) match the BH1 motif. A BH2 motif is present at residues 180 to 195 (PWIQENGGWDTFVELY). The chain crosses the membrane as a helical span at residues 210-226 (FNRWFLTGMTLAGVVLL).

This sequence belongs to the Bcl-2 family. Homodimer. Heterodimers with BAX, BAK or BCL2. Heterodimerization with BAX does not seem to be required for anti-apoptotic activity. Interacts with BCL2L11. Interacts with BAD. Interacts with SIVA1 isoform 1; the interaction inhibits the anti-apoptotic activity. Interacts with BECN1 and PGAM5. Interacts with IKZF3. Interacts with HEBP2. Interacts with BOP. Interacts with p53/TP53 and BBC3; interaction with BBC3 disrupts the interaction with p53/TP53. Interacts with DNM1L and CLTA; DNM1L and BCL2L1 may form a complex in synaptic vesicles that also contains clathrin and MFF. Interacts with ATP5F1A and ATP5F1B; the interactions mediate the association of BCL2L1 with the mitochondrial membrane ATP synthase F(1)F(0) ATP synthase. Interacts with VDAC1. Interacts (via the loop between motifs BH4 and BH3) with NLRP1 (via LRR repeats), but not with NLRP2, NLRP3, NLRP4, PYCARD, nor MEFV. Interacts with BCL2L11 (via BH3). Interacts with RNF183. Interacts with GIMAP3/IAN4. Interacts with GIMAP5 and HSPA8/HSC70; the interaction between HSPA8 and BCL2L1 is impaired in the absence of GIMAP5. Interacts with CLU (isoform 4); this interaction releases and activates BAX and promotes cell death. Proteolytically cleaved by caspases during apoptosis. The cleaved protein, lacking the BH4 motif, has pro-apoptotic activity. Post-translationally, phosphorylated on Ser-62 by CDK1. This phosphorylation is partial in normal mitotic cells, but complete in G2-arrested cells upon DNA-damage, thus promoting subsequent apoptosis probably by triggering caspases-mediated proteolysis. Phosphorylated by PLK3, leading to regulate the G2 checkpoint and progression to cytokinesis during mitosis. Phosphorylation at Ser-49 appears during the S phase and G2, disappears rapidly in early mitosis during prometaphase, metaphase and early anaphase, and re-appears during telophase and cytokinesis. In terms of processing, ubiquitinated by RNF183 during prolonged ER stress, leading to degradation by the proteosome.

It localises to the mitochondrion membrane. Its subcellular location is the nucleus membrane. The protein localises to the mitochondrion matrix. The protein resides in the cytoplasm. It is found in the cytoskeleton. It localises to the microtubule organizing center. Its subcellular location is the centrosome. The protein localises to the cytosol. The protein resides in the cytoplasmic vesicle. It is found in the secretory vesicle. It localises to the synaptic vesicle membrane. Functionally, potent inhibitor of cell death. Inhibits activation of caspases. Appears to regulate cell death by blocking the voltage-dependent anion channel (VDAC) by binding to it and preventing the release of the caspase activator, CYC1, from the mitochondrial membrane. Also acts as a regulator of G2 checkpoint and progression to cytokinesis during mitosis. Regulates presynaptic plasticity, including neurotransmitter release and recovery, number of axonal mitochondria as well as size and number of synaptic vesicle clusters. During synaptic stimulation, increases ATP availability from mitochondria through regulation of mitochondrial membrane ATP synthase F(1)F(0) activity and regulates endocytic vesicle retrieval in hippocampal neurons through association with DMN1L and stimulation of its GTPase activity in synaptic vesicles. May attenuate inflammation impairing NLRP1-inflammasome activation, hence CASP1 activation and IL1B release. In Sus scrofa (Pig), this protein is Bcl-2-like protein 1 (BCL2L1).